The primary structure comprises 320 residues: Probable carboxylesterase M8 (320 aa).

Residues 52–54 (HGG) carry the Involved in the stabilization of the negatively charged intermediate by the formation of the oxyanion hole motif. Catalysis depends on residues Ser-137 and His-296.

It belongs to the 'GDXG' lipolytic enzyme family.

It carries out the reaction a carboxylic ester + H2O = an alcohol + a carboxylate + H(+). Its pathway is secondary metabolite biosynthesis. Its function is as follows. Probable carboxylesterase; part of the gene cluster that mediates the biosynthesis of squalestatin S1 (SQS1, also known as zaragozic acid A), a heavily oxidized fungal polyketide that offers potent cholesterol lowering activity by targeting squalene synthase (SS). SQS1 is composed of a 2,8-dioxobicyclic[3.2.1]octane-3,4,5-tricarboxyclic acid core that is connected to two lipophilic polyketide arms. These initial steps feature the priming of an unusual benzoic acid starter unit onto the highly reducing polyketide synthase pks2, followed by oxaloacetate extension and product release to generate a tricarboxylic acid containing product. The phenylalanine ammonia lyase (PAL) M7 and the acyl-CoA ligase M9 are involved in transforming phenylalanine into benzoyl-CoA. The citrate synthase-like protein R3 is involved in connecting the C-alpha-carbons of the hexaketide chain and oxaloacetate to afford the tricarboxylic acid unit. The potential hydrolytic enzymes, M8 and M10, are in close proximity to pks2 and may participate in product release. On the other side, the tetraketide arm is synthesized by a the squalestatin tetraketide synthase pks1 and enzymatically esterified to the core in the last biosynthetic step, by the acetyltransferase M4. The biosynthesis of the tetraketide must involve 3 rounds of chain extension. After the first and second rounds methyl-transfer occurs, and in all rounds of extension the ketoreductase and dehydratase are active. The enoyl reductase and C-MeT of pks1 are not active in the final round of extension. The acetyltransferase M4 appears to have a broad substrate selectivity for its acyl CoA substrate, allowing the in vitro synthesis of novel squalestatins. The biosynthesis of SQS1 requires several oxidative steps likely performed by oxidoreductases M1, R1 and R2. Finally, in support of the identification of the cluster as being responsible for SQS1 production, the cluster contains a gene encoding a putative squalene synthase (SS) R6, suggesting a likely mechanism for self-resistance. This is Probable carboxylesterase M8 from Phoma sp. (strain ATCC 20986 / MF5453).